The sequence spans 715 residues: ATP-dependent zinc metalloprotease FtsH (715 aa).

The Cytoplasmic portion of the chain corresponds to 1-10 (MKNKNRGFFR). A helical transmembrane segment spans residues 11–31 (SSLSYAFVILAVIFLIYSFFG). The Extracellular portion of the chain corresponds to 32-137 (RSDGSVKHLS…KPAASNFWGS (106 aa)). The chain crosses the membrane as a helical span at residues 138–158 (MLTLILPTLIMFALLYWMLIG). Over 159 to 715 (SQRGQGGSGG…LLDAVNNKFD (557 aa)) the chain is Cytoplasmic. Positions 167 to 187 (GGPGGIMSFGRSKAKPADPKQ) are disordered. Position 233 to 240 (233 to 240 (GPPGTGKT)) interacts with ATP. H455 contacts Zn(2+). Residue E456 is part of the active site. Residues H459 and D531 each contribute to the Zn(2+) site.

The protein in the central section; belongs to the AAA ATPase family. This sequence in the C-terminal section; belongs to the peptidase M41 family. In terms of assembly, homohexamer. Zn(2+) is required as a cofactor.

Its subcellular location is the cell membrane. In terms of biological role, acts as a processive, ATP-dependent zinc metallopeptidase for both cytoplasmic and membrane proteins. Plays a role in the quality control of integral membrane proteins. Functionally, can complement an E.coli ftsH disruption mutant. This Oenococcus oeni (Leuconostoc oenos) protein is ATP-dependent zinc metalloprotease FtsH.